The sequence spans 56 residues: Small ribosomal subunit protein uS14 (56 aa).

Cys-21, Cys-24, Cys-39, and Cys-42 together coordinate Zn(2+).

It belongs to the universal ribosomal protein uS14 family. As to quaternary structure, component of the 40S small ribosomal subunit. It depends on Zn(2+) as a cofactor.

It localises to the cytoplasm. It is found in the cytosol. The protein resides in the rough endoplasmic reticulum. In Plutella xylostella (Diamondback moth), this protein is Small ribosomal subunit protein uS14 (RpS29).